The chain runs to 81 residues: Defensin-like protein 311 (81 aa).

Residues 1–24 form the signal peptide; the sequence is MEKISAFFVILFLVSSCLVTMSVG. Intrachain disulfides connect C27/C50, C33/C57, and C41/C59.

The protein belongs to the DEFL family.

Its subcellular location is the secreted. This is Defensin-like protein 311 from Arabidopsis thaliana (Mouse-ear cress).